The primary structure comprises 191 residues: Inosine triphosphate pyrophosphatase (191 aa).

12-17 contributes to the ITP binding site; the sequence is TGNKNK. E40 lines the Mg(2+) pocket. Residues K52, 68 to 69, K85, 144 to 147, K167, and 172 to 173 each bind ITP; these read DS, FGWE, and HR.

It belongs to the HAM1 NTPase family. In terms of assembly, homodimer. Mg(2+) is required as a cofactor. It depends on Mn(2+) as a cofactor.

Its subcellular location is the cytoplasm. It localises to the nucleus. It carries out the reaction ITP + H2O = IMP + diphosphate + H(+). The catalysed reaction is dITP + H2O = dIMP + diphosphate + H(+). It catalyses the reaction XTP + H2O = XMP + diphosphate + H(+). In terms of biological role, pyrophosphatase that hydrolyzes non-canonical purine nucleotides such as inosine triphosphate (ITP), deoxyinosine triphosphate (dITP) or xanthosine 5'-triphosphate (XTP) to their respective monophosphate derivatives. The enzyme does not distinguish between the deoxy- and ribose forms. Probably excludes non-canonical purines from RNA and DNA precursor pools, thus preventing their incorporation into RNA and DNA and avoiding chromosomal lesions. This is Inosine triphosphate pyrophosphatase from Aspergillus oryzae (strain ATCC 42149 / RIB 40) (Yellow koji mold).